The primary structure comprises 98 residues: Large ribosomal subunit protein eL21 (98 aa).

It belongs to the eukaryotic ribosomal protein eL21 family.

The protein is Large ribosomal subunit protein eL21 of Korarchaeum cryptofilum (strain OPF8).